Consider the following 431-residue polypeptide: 4-hydroxy-3-methylbut-2-en-1-yl diphosphate synthase (flavodoxin) (431 aa).

Basic and acidic residues predominate over residues 1-12; it reads MNKLENPLRDDV. The interval 1–20 is disordered; sequence MNKLENPLRDDVAGPAPRHQ. The [4Fe-4S] cluster site is built by Cys310, Cys313, Cys356, and Glu363.

This sequence belongs to the IspG family. The cofactor is [4Fe-4S] cluster.

The enzyme catalyses (2E)-4-hydroxy-3-methylbut-2-enyl diphosphate + oxidized [flavodoxin] + H2O + 2 H(+) = 2-C-methyl-D-erythritol 2,4-cyclic diphosphate + reduced [flavodoxin]. The protein operates within isoprenoid biosynthesis; isopentenyl diphosphate biosynthesis via DXP pathway; isopentenyl diphosphate from 1-deoxy-D-xylulose 5-phosphate: step 5/6. In terms of biological role, converts 2C-methyl-D-erythritol 2,4-cyclodiphosphate (ME-2,4cPP) into 1-hydroxy-2-methyl-2-(E)-butenyl 4-diphosphate. The sequence is that of 4-hydroxy-3-methylbut-2-en-1-yl diphosphate synthase (flavodoxin) from Rhodopseudomonas palustris (strain TIE-1).